A 1031-amino-acid polypeptide reads, in one-letter code: Receptor-like protein EIX1 (1031 aa).

Residues 1 to 29 (MDKWKYARLAQFLFTLSLLFLETSFGLGG) form the signal peptide. A glycan (N-linked (GlcNAc...) asparagine) is linked at Asn30. Residues 30 to 113 (NKTLCLDKER…PRLTGKLSPS (84 aa)) are N-cap. The Extracellular segment spans residues 30–971 (NKTLCLDKER…DEEEEFPSLE (942 aa)). The LRR 1 repeat unit spans residues 117-140 (LEYLNYLDLSVNEFERSEIPRFIG). The LRR 2; degenerate repeat unit spans residues 142 to 165 (LKRLEYLNLSASFFSGVIPIQFQN). Residues Asn149 and Asn165 are each glycosylated (N-linked (GlcNAc...) asparagine). LRR repeat units lie at residues 166 to 189 (LTSLRTLDLGENNLIVKDLRWLSH), 191 to 215 (SSLEFLSLSSSNFQVNNWFQEITKV), 216 to 240 (PSLKELDLSGCGLSKLVPSQADLAN), and 243 to 266 (LISLSVLHLCCNEFSSSSEYSWVF). The N-linked (GlcNAc...) asparagine glycan is linked to Asn240. N-linked (GlcNAc...) asparagine glycosylation occurs at Asn267. LRR repeat units follow at residues 269–292 (TTSLTSIDLLYNQLSGQIDDRFGT), 293–317 (LMYLEHLDLANNLKIEGGVPSSFGN), 318–341 (LTRLRHLDMSNTQTVQWLPELFLR), 346–369 (RKSLEVLGLNENSLFGSIVNATRF), 370–393 (SSLKKLYLQKNMLNGSFMESAGQV), 394–416 (STLEYLDLSENQMRGALPDLALF), 417–440 (PSLRELHLGSNQFRGRIPQGIGKL), 441–463 (SQLRILDVSSNRLEGLPESMGQL), 465–487 (NLESFDASYNVLKGTITESHLSN), 488–509 (LSSLVDLDLSFNSLALKTSFNW), 512–536 (PFQLQVISLPSCNLGPSFPKWLQNQ), 538–559 (NYTVLDISLASISDTLPSWFSS), 561–584 (PPDLKILNLSNNQISGRVSDLIEN), and 586–611 (YGYRVIDLSYNNFSGALPLVPTNVQI). An N-linked (GlcNAc...) asparagine glycan is attached at Asn317. N-linked (GlcNAc...) asparagine glycosylation is found at Asn365 and Asn383. A glycan (N-linked (GlcNAc...) asparagine) is linked at Asn487. N-linked (GlcNAc...) asparagine glycans are attached at residues Asn538, Asn568, and Asn597. An LRR 21; degenerate repeat occupies 612–629 (FYLHKNQFFGSISSICRS). LRR repeat units lie at residues 630 to 654 (RTSPTSLDLSHNQFSGELPDCWMNM), 655 to 678 (TSLAVLNLAYNNFSGEIPHSLGSL), 679 to 703 (TNLKALYIRQNSLSGMLPSFSQCQG), 705 to 725 (QILDLGGNKLTGSIPGWIGTD), 726 to 750 (LLNLRILSLRFNRLHGSIPSIICQL), and 752 to 773 (FLQILDLSANGLSGKIPHCFNN). Asn653 and Asn666 each carry an N-linked (GlcNAc...) asparagine glycan. 2 N-linked (GlcNAc...) asparagine glycosylation sites follow: Asn773 and Asn781. LRR repeat units follow at residues 823-847 (LLYLKTIDLSSNELIGGVPKEIADM), 848-871 (RGLKSLNLSRNELNGTVIEGIGQM), 872-895 (RMLESLDMSRNQLSGVIPQDLANL), and 896-918 (TFLSVLDLSNNQLSGRIPSSTQL). Residues Asn854, Asn861, and Asn894 are each glycosylated (N-linked (GlcNAc...) asparagine). Residues 919-971 (QSFDRSSYSDNAQLCGPPLQECPGYAPPSPLIDHGSNNNPQEHDEEEEFPSLE) are C-cap/acidic domain. The chain crosses the membrane as a helical span at residues 972 to 992 (FYISMVLSFFVAFWGILGCLI). Topologically, residues 993–1031 (VNSSWRNAYFKFLTDTTSWLDMISRVWFARLKKKLRRAR) are cytoplasmic.

This sequence belongs to the RLP family. In terms of assembly, interacts with EIX elicitor protein.

The protein localises to the cell membrane. Its function is as follows. Involved in plant defense. Confers resistance to the fungal pathogen T.viride through recognition of the EIX elicitor protein. The sequence is that of Receptor-like protein EIX1 from Solanum lycopersicum (Tomato).